The primary structure comprises 161 residues: uncharacterized protein (161 aa).

This is an uncharacterized protein from Sinorhizobium fredii (strain NBRC 101917 / NGR234).